Here is a 596-residue protein sequence, read N- to C-terminus: V-type ATP synthase alpha chain (596 aa).

233-240 provides a ligand contact to ATP; it reads GPFGAGKT.

The protein belongs to the ATPase alpha/beta chains family.

It catalyses the reaction ATP + H2O + 4 H(+)(in) = ADP + phosphate + 5 H(+)(out). Functionally, produces ATP from ADP in the presence of a proton gradient across the membrane. The V-type alpha chain is a catalytic subunit. The chain is V-type ATP synthase alpha chain from Streptococcus gordonii (strain Challis / ATCC 35105 / BCRC 15272 / CH1 / DL1 / V288).